The primary structure comprises 265 residues: MTGLPDAPEVPPVAVEIFGTRTGSAARYVELLATDGVERGLIGPRETDRLWDRHVLNCAVLADVVPVQADVVDVGSGAGLPGIPLALARPDLRVVLLEPMERRCRFLHEVVATIGLEDQISVVRGRAPDAGIGPDGRRFGIAVARAVAPLERLGAILFPMLRPGGVMLAMRGSRILEELQDARSGLGTQGWHPVDVVRCGEGRVEEPARVLRAVRSSQRTRAESRGGRGDGERHDGRQVRRTSRDSLRSREVGRDQPTRGQSRST.

Positions 75, 80, and 145 each coordinate S-adenosyl-L-methionine. The disordered stretch occupies residues Arg-212–Thr-265. Residues Thr-220–Pro-257 show a composition bias toward basic and acidic residues.

This sequence belongs to the methyltransferase superfamily. RNA methyltransferase RsmG family.

The protein localises to the cytoplasm. Its function is as follows. Specifically methylates the N7 position of guanine in position 518 of 16S rRNA. This chain is Ribosomal RNA small subunit methyltransferase G, found in Frankia casuarinae (strain DSM 45818 / CECT 9043 / HFP020203 / CcI3).